A 2410-amino-acid polypeptide reads, in one-letter code: Genome polyprotein 1 (2410 aa).

The interval 1 to 21 is disordered; that stretch reads MEQTLAQAVSRRNKTDTPMAE. Positions 474 to 632 constitute a Helicase ATP-binding domain; the sequence is AMADANNCWS…AARKYPLHVE (159 aa). 487-494 is an ATP binding site; that stretch reads GHTGSGKS. The short motif at 583 to 586 is the DEAH box element; that stretch reads DEAH. The region spanning 647–813 is the Helicase C-terminal domain; it reads GGGDLLDISK…NVPFYMNETF (167 aa). At Tyr-1234 the chain carries O-(5'-phospho-RNA)-tyrosine. The 215-residue stretch at 1359–1573 folds into the Peptidase C4 domain; the sequence is ITLEASTGIL…CGYASHTALF (215 aa). Catalysis depends on for nuclear inclusion protein A activity residues His-1404, Asp-1440, and Cys-1507. The RdRp catalytic domain occupies 1857–1980; that stretch reads WLHGSGDGSR…AISPQFDEEF (124 aa). The tract at residues 2175-2200 is disordered; that stretch reads MPTEDDGKLKTPSGARIPSSAADGNW.

It belongs to the bymoviruses polyprotein 1 family. In terms of processing, VPg is uridylylated by the polymerase and is covalently attached to the 5'-end of the genomic RNA. This uridylylated form acts as a nucleotide-peptide primer for the polymerase. Post-translationally, the viral RNA1 of bymoviruses is expressed as a single polyprotein which undergoes post-translational proteolytic processing by the main proteinase NIa-pro resulting in the production of at least eight individual proteins.

The protein localises to the host cytoplasmic vesicle. The protein resides in the virion. It carries out the reaction RNA(n) + a ribonucleoside 5'-triphosphate = RNA(n+1) + diphosphate. The catalysed reaction is Hydrolyzes glutaminyl bonds, and activity is further restricted by preferences for the amino acids in P6 - P1' that vary with the species of potyvirus, e.g. Glu-Xaa-Xaa-Tyr-Xaa-Gln-|-(Ser or Gly) for the enzyme from tobacco etch virus. The natural substrate is the viral polyprotein, but other proteins and oligopeptides containing the appropriate consensus sequence are also cleaved.. Functionally, indispensable for virus replication. In terms of biological role, mediates the cap-independent, EIF4E-dependent translation of viral genomic RNAs. Binds to the cap-binding site of host EIF4E and thus interferes with the host EIF4E-dependent mRNA export and translation. VPg-RNA directly binds EIF4E and is a template for transcription. Also forms trimeric complexes with EIF4E-EIF4G, which are templates for translation. Has RNA-binding and proteolytic activities. Its function is as follows. An RNA-dependent RNA polymerase that plays an essential role in the virus replication. This is Genome polyprotein 1 from Hordeum vulgare (Barley).